Reading from the N-terminus, the 47-residue chain is Rhodotorucin-A peptides type 3 (47 aa).

Positions 1-3 (MVA) are excised as a propeptide. Cys-14 carries S-farnesyl cysteine lipidation. Positions 15 to 18 (TVAK) are excised as a propeptide. Cys-29 is lipidated: S-farnesyl cysteine. Positions 30–33 (TVSK) are excised as a propeptide. Cys-44 is lipidated: S-farnesyl cysteine. Residues 45-47 (TVA) constitute a propeptide that is removed on maturation.

The protein resides in the cell membrane. Its function is as follows. Rhodotorucin-A is a mating pheromone in cells of mating type A of Rhodosporidium toruloides. This Rhodotorula toruloides (Yeast) protein is Rhodotorucin-A peptides type 3 (RHA3).